Here is a 470-residue protein sequence, read N- to C-terminus: Angiopoietin-related protein 6 (470 aa).

An N-terminal signal peptide occupies residues 1 to 20 (MGKPWLRALQLLLLLGASWA). The N-linked (GlcNAc...) asparagine glycan is linked to Asn58. The stretch at 59 to 116 (ASELAALRMRVGRHEELLRELQRLAAADGAVAGEVRALRKESRGLSARLGQLRAQLQH) forms a coiled coil. Asn145 is a glycosylation site (N-linked (GlcNAc...) (complex) asparagine). Residues 214–249 (SDTSRMLDPAPEPQRDQTQRQQEPMASPMPAGHPAV) are disordered. The 219-residue stretch at 251 to 469 (TKPVGPWQDC…KAAMLIRPLK (219 aa)) folds into the Fibrinogen C-terminal domain. Cystine bridges form between Cys260–Cys287 and Cys410–Cys423.

It localises to the secreted. Its function is as follows. May play a role in the wound healing process. May promote epidermal proliferation, remodeling and regeneration. May promote the chemotactic activity of endothelial cells and induce neovascularization. May counteract high-fat diet-induced obesity and related insulin resistance through increased energy expenditure. The protein is Angiopoietin-related protein 6 (ANGPTL6) of Homo sapiens (Human).